Reading from the N-terminus, the 454-residue chain is tRNA modification GTPase MnmE (454 aa).

Positions 23, 80, and 120 each coordinate (6S)-5-formyl-5,6,7,8-tetrahydrofolate. In terms of domain architecture, TrmE-type G spans 216 to 377; it reads GMRVVIAGRP…VREHLKACIG (162 aa). Asparagine 226 is a K(+) binding site. Residues 226–231, 245–251, 270–273, and 335–338 contribute to the GTP site; these read NAGKSS, TEIAGTT, DTAG, and NKAD. Serine 230 is a Mg(2+) binding site. K(+) contacts are provided by threonine 245, isoleucine 247, and threonine 250. Position 251 (threonine 251) interacts with Mg(2+). Lysine 454 provides a ligand contact to (6S)-5-formyl-5,6,7,8-tetrahydrofolate.

Belongs to the TRAFAC class TrmE-Era-EngA-EngB-Septin-like GTPase superfamily. TrmE GTPase family. As to quaternary structure, homodimer. Heterotetramer of two MnmE and two MnmG subunits. K(+) is required as a cofactor.

The protein resides in the cytoplasm. Exhibits a very high intrinsic GTPase hydrolysis rate. Involved in the addition of a carboxymethylaminomethyl (cmnm) group at the wobble position (U34) of certain tRNAs, forming tRNA-cmnm(5)s(2)U34. In Pseudoalteromonas translucida (strain TAC 125), this protein is tRNA modification GTPase MnmE.